The chain runs to 206 residues: Ras-related protein ralB-A (206 aa).

21 to 28 (GSGGVGKS) is a binding site for GTP. An Effector region motif is present at residues 43-51 (YEPTKADSY). Residues 68–72 (DTAGQ) and 128–131 (NKSD) each bind GTP. A compositionally biased stretch (basic and acidic residues) spans 180-189 (KMSENKDKNG). Residues 180 to 206 (KMSENKDKNGKKSGKSKKGFKQRCCLL) form a disordered region. Positions 190-200 (KKSGKSKKGFK) are enriched in basic residues. Cysteine methyl ester is present on Cys203. Cys203 is lipidated: S-geranylgeranyl cysteine. The propeptide at 204–206 (CLL) is removed in mature form.

It belongs to the small GTPase superfamily. Ras family. As to quaternary structure, interacts with ralbp1 and rap1gds1. Weakly expressed in adult tissues and highest levels were found in heart, brain and testes.

It localises to the cell membrane. The protein localises to the midbody. The enzyme catalyses GTP + H2O = GDP + phosphate + H(+). Its function is as follows. Multifunctional GTPase involved in a variety of cellular processes including gene expression, cell migration, cell proliferation, oncogenic transformation and membrane trafficking. Accomplishes its multiple functions by interacting with distinct downstream effectors. Acts as a GTP sensor for GTP-dependent exocytosis of dense core vesicles. Required both to stabilize the assembly of the exocyst complex and to localize functional exocyst complexes to the leading edge of migrating cells. Required for suppression of apoptosis. In late stages of cytokinesis, upon completion of the bridge formation between dividing cells, mediates exocyst recruitment to the midbody to drive abscission. Regulates the actin cytoskeleton to play a role in gastrulation or neurulation. During the cleavage stages, the GTP-bound form induces a cortical reaction that affects the localization of pigment granules. Activated by the FGF pathway via ras and ral-GDS, but independently of raf. Directs ralbp1 to the plasma membrane. Involved in ligand-dependent receptor mediated endocytosis of the EGF and insulin receptors. The sequence is that of Ras-related protein ralB-A (ralb-a) from Xenopus laevis (African clawed frog).